We begin with the raw amino-acid sequence, 269 residues long: Probable cysteine protease avirulence protein AvrPpiC2 (269 aa).

Residues 1 to 39 (MTIVSGHIGKHPSLTTVQAGSSASVENQMPDPAQFSDGR) are disordered. The segment covering 13–27 (SLTTVQAGSSASVEN) has biased composition (polar residues). Active-site residues include Cys72, His213, and Asp230.

This sequence belongs to the peptidase C58 family.

Its function is as follows. Potential cysteine protease. Avirulence protein, which may be essential during infection of plant cells from Pea and some Arabidopsis thaliana cultivars. May act by affecting the plant defense system. In plants lacking appropriate resistance (R) gene, it probably impairs the plant defense system and leads to the bacteria multiplication. In contrast, in plants containing the appropriate R protein, it is unable to induce disease symptoms, explaining its avirulence name. The sequence is that of Probable cysteine protease avirulence protein AvrPpiC2 (avrPpiC2) from Pseudomonas syringae pv. pisi.